We begin with the raw amino-acid sequence, 150 residues long: Avidin-related protein 7 (150 aa).

Positions 1 to 24 (MVHATSPLLLLLLLSLALVAPGLS) are cleaved as a signal peptide. One can recognise an Avidin-like domain in the interval 26–147 (RKCSLTGEWD…GYNNFTRQRT (122 aa)). The cysteines at positions 28 and 105 are disulfide-linked. 2 residues coordinate biotin: N36 and S40. Residues N41 and N54 are each glycosylated (N-linked (GlcNAc...) asparagine). Biotin-binding residues include Y57, T59, and D63. N93 carries an N-linked (GlcNAc...) asparagine glycan. The biotin site is built by S95, S99, and N140. An N-linked (GlcNAc...) asparagine glycan is attached at N141.

This sequence belongs to the avidin/streptavidin family. In terms of assembly, homotetramer. In terms of processing, glycosylated.

It localises to the secreted. Forms a strong non-covalent specific complex with biotin. In Gallus gallus (Chicken), this protein is Avidin-related protein 7 (AVR7).